Here is a 35-residue protein sequence, read N- to C-terminus: Photosystem II reaction center protein T (35 aa).

The chain crosses the membrane as a helical span at residues 3–23 (ALVYTFLLVGTLGIIFFAIFF).

It belongs to the PsbT family. As to quaternary structure, PSII is composed of 1 copy each of membrane proteins PsbA, PsbB, PsbC, PsbD, PsbE, PsbF, PsbH, PsbI, PsbJ, PsbK, PsbL, PsbM, PsbT, PsbY, PsbZ, Psb30/Ycf12, at least 3 peripheral proteins of the oxygen-evolving complex and a large number of cofactors. It forms dimeric complexes.

The protein resides in the plastid. It localises to the chloroplast thylakoid membrane. Its function is as follows. Found at the monomer-monomer interface of the photosystem II (PS II) dimer, plays a role in assembly and dimerization of PSII. PSII is a light-driven water plastoquinone oxidoreductase, using light energy to abstract electrons from H(2)O, generating a proton gradient subsequently used for ATP formation. The chain is Photosystem II reaction center protein T from Chaetosphaeridium globosum (Charophycean green alga).